Here is a 146-residue protein sequence, read N- to C-terminus: Large ribosomal subunit protein bL9 (146 aa).

The protein belongs to the bacterial ribosomal protein bL9 family.

Binds to the 23S rRNA. The sequence is that of Large ribosomal subunit protein bL9 from Deinococcus deserti (strain DSM 17065 / CIP 109153 / LMG 22923 / VCD115).